Here is a 123-residue protein sequence, read N- to C-terminus: Large ribosomal subunit protein bL17 (123 aa).

This sequence belongs to the bacterial ribosomal protein bL17 family. As to quaternary structure, part of the 50S ribosomal subunit. Contacts protein L32.

In Borreliella afzelii (strain PKo) (Borrelia afzelii), this protein is Large ribosomal subunit protein bL17.